Reading from the N-terminus, the 321-residue chain is Biotin synthase (321 aa).

Positions 45-274 (FHGNRVDLCS…GALIRLCGGR (230 aa)) constitute a Radical SAM core domain. Residues Cys-63, Cys-67, and Cys-70 each coordinate [4Fe-4S] cluster. The [2Fe-2S] cluster site is built by Cys-139, Cys-199, and Arg-269.

Belongs to the radical SAM superfamily. Biotin synthase family. In terms of assembly, homodimer. It depends on [4Fe-4S] cluster as a cofactor. Requires [2Fe-2S] cluster as cofactor.

The catalysed reaction is (4R,5S)-dethiobiotin + (sulfur carrier)-SH + 2 reduced [2Fe-2S]-[ferredoxin] + 2 S-adenosyl-L-methionine = (sulfur carrier)-H + biotin + 2 5'-deoxyadenosine + 2 L-methionine + 2 oxidized [2Fe-2S]-[ferredoxin]. It functions in the pathway cofactor biosynthesis; biotin biosynthesis; biotin from 7,8-diaminononanoate: step 2/2. Functionally, catalyzes the conversion of dethiobiotin (DTB) to biotin by the insertion of a sulfur atom into dethiobiotin via a radical-based mechanism. The sequence is that of Biotin synthase from Pelotomaculum thermopropionicum (strain DSM 13744 / JCM 10971 / SI).